A 492-amino-acid chain; its full sequence is Putative BTB/POZ domain and WD-repeat protein R786 (492 aa).

The 71-residue stretch at 16-86 (TDVEIVLIDE…FYGQIVDSTN (71 aa)) folds into the BTB domain. WD repeat units follow at residues 241–281 (QSSC…IKIK) and 286–325 (LINR…SKGI).

Belongs to the mimivirus BTB/WD family.

The polypeptide is Putative BTB/POZ domain and WD-repeat protein R786 (Acanthamoeba polyphaga (Amoeba)).